We begin with the raw amino-acid sequence, 194 residues long: 5-formyltetrahydrofolate cyclo-ligase (194 aa).

Residues 6–10 (KSQLR), 139–146 (GRGAGFYD), and Asp-177 contribute to the ATP site.

This sequence belongs to the 5-formyltetrahydrofolate cyclo-ligase family.

The catalysed reaction is (6S)-5-formyl-5,6,7,8-tetrahydrofolate + ATP = (6R)-5,10-methenyltetrahydrofolate + ADP + phosphate. It functions in the pathway one-carbon metabolism; tetrahydrofolate interconversion. In terms of biological role, involved in the removal of 5-formyltetrahydrofolate. In vitro, it is a potent inhibitor of various folate-dependent enzymes in the C1 metabolism network and in vivo it might function as a folate storage. 5-formyltetrahydrofolate is also used as an antifolate rescue agent in cancer chemotherapy. Catalyzes the irreversible ATP-dependent transformation of 5-formyltetrahydrofolate (5-CHO-THF) to form 5,10-methenyltetrahydrofolate (5,10-CH=THF). The reverse reaction is catalyzed by the serine hydroxymethyltransferase GlyA (SHMT). The chain is 5-formyltetrahydrofolate cyclo-ligase from Mycolicibacterium smegmatis (strain ATCC 700084 / mc(2)155) (Mycobacterium smegmatis).